The sequence spans 383 residues: La protein homolog (383 aa).

Residues 1–43 (MTEVEAKATATEETTKEEEEAPETTAEQTEESAQETSENVSKL) form a disordered region. The span at 15-33 (TKEEEEAPETTAEQTEESA) shows a compositional bias: acidic residues. An HTH La-type RNA-binding domain is found at 37-129 (SENVSKLEAS…RRHPERPLPE (93 aa)). An RRM domain is found at 141-228 (RTVYVKGFAP…RKMQDDYFEE (88 aa)). Residues 249–368 (HLPKGASVHL…RTPEGRQASR (120 aa)) form the xRRM domain. Residues 343-383 (KDQQARRQASNARNKGRTPEGRQASRPPQEWRRKAKGGRGE) form a disordered region.

It is found in the nucleus. It localises to the cytoplasm. Functionally, may be involved in transcription termination by RNA polymerase III. Binds RNA and DNA. Binds to the 3' end of the minus strand of Sindbis virus RNA. This may be significant for Sindbis virus RNA replication. The polypeptide is La protein homolog (Aedes albopictus (Asian tiger mosquito)).